Consider the following 1561-residue polypeptide: Adhesion G protein-coupled receptor B2 (1561 aa).

An N-terminal signal peptide occupies residues 1-20 (MTPACPLLLSVILSLRLATA). The Extracellular portion of the chain corresponds to 21–930 (FDPAPSACSA…ELAGAPSVPL (910 aa)). 3 N-linked (GlcNAc...) asparagine glycosylation sites follow: Asn-94, Asn-182, and Asn-183. O-linked (Xyl...) (chondroitin sulfate) serine glycosylation occurs at Ser-257. 4 consecutive TSP type-1 domains span residues 300–353 (DPAA…ATCP), 355–408 (HGVW…AACP), 410–463 (EGQW…LDCP), and 466–519 (DGKW…KRCP). Intrachain disulfides connect Cys-312-Cys-346, Cys-316-Cys-352, Cys-327-Cys-336, Cys-367-Cys-402, Cys-371-Cys-407, Cys-382-Cys-392, Cys-422-Cys-457, Cys-426-Cys-462, Cys-437-Cys-447, Cys-478-Cys-513, Cys-482-Cys-518, Cys-493-Cys-503, Cys-525-Cys-560, and Cys-548-Cys-578. Asn-347 carries N-linked (GlcNAc...) asparagine glycosylation. Asn-428 is a glycosylation site (N-linked (GlcNAc...) asparagine). Residues Asn-551 and Asn-636 are each glycosylated (N-linked (GlcNAc...) asparagine). Positions 748–918 (DRLFLPKEVL…AVLAQPPKDL (171 aa)) constitute a GAIN-B domain. Residues 757-797 (LSLSSPGKPATPGAATAGSPGRGRGPGTVPPGPGHAHQRLL) form a disordered region. Residues 760 to 775 (SSPGKPATPGAATAGS) show a composition bias toward low complexity. Asn-861 is a glycosylation site (N-linked (GlcNAc...) asparagine). 2 disulfide bridges follow: Cys-868/Cys-900 and Cys-888/Cys-902. The segment at 868–918 (CASWDYSRADTNSGDWNTESCQTLETQAAHTRCQCQHLSTFAVLAQPPKDL) is GPS. The helical transmembrane segment at 931-951 (VIGCAVSCMALLTLLAIYAAF) threads the bilayer. At 952-959 (WRFIKSER) the chain is on the cytoplasmic side. The helical transmembrane segment at 960 to 980 (SIILLNFCLSILASNILILVG) threads the bilayer. The Extracellular segment spans residues 981–988 (QSRVLSKG). Residues 989–1009 (VCTMTAAFLHFFFLSSFCWVL) form a helical membrane-spanning segment. Over 1010 to 1030 (TEAWQSYLAVIGRMRTRLVRK) the chain is Cytoplasmic. The helical transmembrane segment at 1031 to 1051 (RFLCLGWGLPALVVAVSVGFT) threads the bilayer. Topologically, residues 1052-1072 (RTKGYGTSSYCWLSLEGGLLY) are extracellular. A helical membrane pass occupies residues 1073–1093 (AFVGPAAVIVLVNMLIGIIVF). Over 1094 to 1115 (NKLMARDGVSDKSKKQRAGSER) the chain is Cytoplasmic. A helical membrane pass occupies residues 1116–1136 (CPWASLLLPCSACGAVPSPLL). Residues 1137–1147 (SSASARNAMAS) are Extracellular-facing. The helical transmembrane segment at 1148-1168 (LWSSCVVLPLLALTWMSAVLA) threads the bilayer. Over 1169-1561 (MTDRRSVLFQ…PPDGDFQTEV (393 aa)) the chain is Cytoplasmic. At Tyr-1345 the chain carries Phosphotyrosine. Disordered stretches follow at residues 1355 to 1377 (LQPG…GTPR), 1417 to 1447 (FQPP…PGST), and 1491 to 1561 (RYRS…QTEV). Positions 1366–1376 (EAPRARPEGTP) are enriched in basic and acidic residues. The span at 1491–1502 (RYRSQSSAKEKP) shows a compositional bias: basic and acidic residues. Over residues 1519 to 1528 (SWSTFKSMTL) the composition is skewed to polar residues. Acidic residues predominate over residues 1551-1561 (EPPDGDFQTEV).

Belongs to the G-protein coupled receptor 2 family. Adhesion G-protein coupled receptor (ADGR) subfamily. In terms of assembly, heterodimer of 2 chains generated by proteolytic processing; the large extracellular N-terminal fragment and the membrane-bound C-terminal fragment predominantly remain associated and non-covalently linked. Interacts with GABPB2. Interacts (via carboxy-terminus) with TAX1BP3. Interacts with GNAZ. Interacts with SH3GL2. Post-translationally, glycosylated. Autoproteolytically processed at the GPS region of the GAIN-B domain; this cleavage modulates receptor activity. Additionally, furin is involved in the cleavage at another site, in the middle of the extracellular domain, generating a soluble fragment. As to expression, specifically expressed in the brain. The peak level in the brain is observed 10 days after birth.

It localises to the cell membrane. The protein resides in the secreted. With respect to regulation, receptor activity is regulated by proteolytic processing. The long N-terminal has a an inhibitory effect on the constitutive signaling activity. Removal of the N-terminal region induces an increase of the receptor activity. In terms of biological role, orphan G-protein coupled receptor involved in cell adhesion and probably in cell-cell interactions. Activates NFAT-signaling pathway, a transcription factor, via the G-protein GNAZ. Involved in angiogenesis inhibition. The sequence is that of Adhesion G protein-coupled receptor B2 (Adgrb2) from Mus musculus (Mouse).